Reading from the N-terminus, the 350-residue chain is Protein-glutamate methylesterase/protein-glutamine glutaminase 1 (350 aa).

Residues 1 to 116 (MVVDDSAVVR…KGFLHDSAKV (116 aa)) enclose the Response regulatory domain. The residue at position 50 (Asp50) is a 4-aspartylphosphate. The CheB-type methylesterase domain occupies 160–350 (LKTTEQLVAI…IPQAILDCSH (191 aa)). Catalysis depends on residues Ser172, His198, and Asp294.

The protein belongs to the CheB family. In terms of processing, phosphorylated by CheA. Phosphorylation of the N-terminal regulatory domain activates the methylesterase activity.

Its subcellular location is the cytoplasm. It catalyses the reaction [protein]-L-glutamate 5-O-methyl ester + H2O = L-glutamyl-[protein] + methanol + H(+). It carries out the reaction L-glutaminyl-[protein] + H2O = L-glutamyl-[protein] + NH4(+). Functionally, involved in chemotaxis. Part of a chemotaxis signal transduction system that modulates chemotaxis in response to various stimuli. Catalyzes the demethylation of specific methylglutamate residues introduced into the chemoreceptors (methyl-accepting chemotaxis proteins or MCP) by CheR. Also mediates the irreversible deamidation of specific glutamine residues to glutamic acid. In Photobacterium profundum (strain SS9), this protein is Protein-glutamate methylesterase/protein-glutamine glutaminase 1.